The primary structure comprises 374 residues: Glutamate 5-kinase (374 aa).

An ATP-binding site is contributed by lysine 8. Substrate contacts are provided by serine 49, aspartate 136, and asparagine 148. ATP-binding positions include 168-169 (TD) and 211-217 (TGGMQTK). The region spanning 276-354 (QGILTLDDGA…TQIRQILGYG (79 aa)) is the PUA domain.

This sequence belongs to the glutamate 5-kinase family.

It localises to the cytoplasm. The enzyme catalyses L-glutamate + ATP = L-glutamyl 5-phosphate + ADP. It participates in amino-acid biosynthesis; L-proline biosynthesis; L-glutamate 5-semialdehyde from L-glutamate: step 1/2. Catalyzes the transfer of a phosphate group to glutamate to form L-glutamate 5-phosphate. The polypeptide is Glutamate 5-kinase (Picosynechococcus sp. (strain ATCC 27264 / PCC 7002 / PR-6) (Agmenellum quadruplicatum)).